Here is a 172-residue protein sequence, read N- to C-terminus: NADH-ubiquinone oxidoreductase chain 6 (172 aa).

Helical transmembrane passes span 1 to 21 (MAFY…AIAS), 24 to 44 (APYF…GILV), 53 to 73 (LILF…SAAL), 86 to 106 (VVFW…GFLL), and 140 to 160 (GKML…VLEV).

Belongs to the complex I subunit 6 family. As to quaternary structure, core subunit of respiratory chain NADH dehydrogenase (Complex I) which is composed of 45 different subunits.

Its subcellular location is the mitochondrion inner membrane. It catalyses the reaction a ubiquinone + NADH + 5 H(+)(in) = a ubiquinol + NAD(+) + 4 H(+)(out). In terms of biological role, core subunit of the mitochondrial membrane respiratory chain NADH dehydrogenase (Complex I) which catalyzes electron transfer from NADH through the respiratory chain, using ubiquinone as an electron acceptor. Essential for the catalytic activity and assembly of complex I. This Danio rerio (Zebrafish) protein is NADH-ubiquinone oxidoreductase chain 6 (mt-nd6).